A 400-amino-acid polypeptide reads, in one-letter code: Phosphoribosylamine--glycine ligase (400 aa).

The region spanning 99-303 is the ATP-grasp domain; the sequence is KRFMKKYGIR…FVNAVLEGYR (205 aa). An ATP-binding site is contributed by 125-186; sequence IKKFSPPYVI…DEFLAGNELS (62 aa). Mg(2+) is bound by residues Glu-273 and Asn-275.

This sequence belongs to the GARS family. The cofactor is Mg(2+). It depends on Mn(2+) as a cofactor.

It carries out the reaction 5-phospho-beta-D-ribosylamine + glycine + ATP = N(1)-(5-phospho-beta-D-ribosyl)glycinamide + ADP + phosphate + H(+). It functions in the pathway purine metabolism; IMP biosynthesis via de novo pathway; N(1)-(5-phospho-D-ribosyl)glycinamide from 5-phospho-alpha-D-ribose 1-diphosphate: step 2/2. This is Phosphoribosylamine--glycine ligase from Thermotoga maritima (strain ATCC 43589 / DSM 3109 / JCM 10099 / NBRC 100826 / MSB8).